Reading from the N-terminus, the 145-residue chain is Ribonuclease HI (145 aa).

The 142-residue stretch at 1-142 (MNQTVYLYTD…ADDLANRGAA (142 aa)) folds into the RNase H type-1 domain. Positions 10, 48, 70, and 134 each coordinate Mg(2+).

It belongs to the RNase H family. In terms of assembly, monomer. Requires Mg(2+) as cofactor.

The protein resides in the cytoplasm. The enzyme catalyses Endonucleolytic cleavage to 5'-phosphomonoester.. Its function is as follows. Endonuclease that specifically degrades the RNA of RNA-DNA hybrids. The polypeptide is Ribonuclease HI (Neisseria meningitidis serogroup A / serotype 4A (strain DSM 15465 / Z2491)).